Consider the following 145-residue polypeptide: 3-hydroxyacyl-[acyl-carrier-protein] dehydratase FabZ (145 aa).

H49 is an active-site residue.

It belongs to the thioester dehydratase family. FabZ subfamily.

It localises to the cytoplasm. The catalysed reaction is a (3R)-hydroxyacyl-[ACP] = a (2E)-enoyl-[ACP] + H2O. Its function is as follows. Involved in unsaturated fatty acids biosynthesis. Catalyzes the dehydration of short chain beta-hydroxyacyl-ACPs and long chain saturated and unsaturated beta-hydroxyacyl-ACPs. This chain is 3-hydroxyacyl-[acyl-carrier-protein] dehydratase FabZ, found in Rickettsia akari (strain Hartford).